The sequence spans 163 residues: Peptidyl-prolyl cis-trans isomerase (163 aa).

The PPIase cyclophilin-type domain maps to 17–163; the sequence is KTAYATIKTN…IESVVFSSSL (147 aa).

This sequence belongs to the cyclophilin-type PPIase family.

The enzyme catalyses [protein]-peptidylproline (omega=180) = [protein]-peptidylproline (omega=0). In terms of biological role, PPIases accelerate the folding of proteins. It catalyzes the cis-trans isomerization of proline imidic peptide bonds in oligopeptides. The protein is Peptidyl-prolyl cis-trans isomerase (ppiA) of Helicobacter pylori (strain ATCC 700392 / 26695) (Campylobacter pylori).